A 342-amino-acid chain; its full sequence is Protein-glutamate methylesterase/protein-glutamine glutaminase 3 (342 aa).

A Response regulatory domain is found at 3–120; that stretch reads RVLVVEDMPT…SPGFADDARR (118 aa). The residue at position 54 (aspartate 54) is a 4-aspartylphosphate. Residues 152–342 enclose the CheB-type methylesterase domain; sequence DVPRGRVVAV…ADRLALWLRR (191 aa). Catalysis depends on residues serine 164, histidine 191, and aspartate 285.

This sequence belongs to the CheB family. In terms of processing, phosphorylated by CheA. Phosphorylation of the N-terminal regulatory domain activates the methylesterase activity.

It localises to the cytoplasm. The catalysed reaction is [protein]-L-glutamate 5-O-methyl ester + H2O = L-glutamyl-[protein] + methanol + H(+). The enzyme catalyses L-glutaminyl-[protein] + H2O = L-glutamyl-[protein] + NH4(+). Its function is as follows. Involved in chemotaxis. Part of a chemotaxis signal transduction system that modulates chemotaxis in response to various stimuli. Catalyzes the demethylation of specific methylglutamate residues introduced into the chemoreceptors (methyl-accepting chemotaxis proteins or MCP) by CheR. Also mediates the irreversible deamidation of specific glutamine residues to glutamic acid. This chain is Protein-glutamate methylesterase/protein-glutamine glutaminase 3, found in Anaeromyxobacter dehalogenans (strain 2CP-C).